We begin with the raw amino-acid sequence, 151 residues long: Large ribosomal subunit protein bL9 (151 aa).

It belongs to the bacterial ribosomal protein bL9 family.

In terms of biological role, binds to the 23S rRNA. The polypeptide is Large ribosomal subunit protein bL9 (Mycolicibacterium vanbaalenii (strain DSM 7251 / JCM 13017 / BCRC 16820 / KCTC 9966 / NRRL B-24157 / PYR-1) (Mycobacterium vanbaalenii)).